The primary structure comprises 246 residues: MRVILVIGRSNSGKLDFIKALTGSLPKGLDDEAFNNDHSGLIHKYNIRNKYFEASVGIWIEEYSNLAETLDAYSSEEAKEVIDSLGAIVYTFRSFDEAEWSLFKNFIDKLQLEIPVIGLHMSDEKLLEPPDVFTPEYISISEEGVNEFNEKVGLDRVREILDCCEWNLSQVDKSFSEEKDDAGDFYLPERFKGSPDMQSTDLDNLMKEMNQIRDADLEKNEKKAKALNLLEKLLGDEFEENDYESL.

Ser-194 carries the post-translational modification Phosphoserine.

This is an uncharacterized protein from Schizosaccharomyces pombe (strain 972 / ATCC 24843) (Fission yeast).